The sequence spans 142 residues: Transcriptional regulator MraZ (142 aa).

SpoVT-AbrB domains follow at residues 5-51 (ASAL…PRPE) and 77-120 (AMDV…DAQT).

The protein belongs to the MraZ family. Forms oligomers.

The protein resides in the cytoplasm. It localises to the nucleoid. The polypeptide is Transcriptional regulator MraZ (Paraburkholderia phytofirmans (strain DSM 17436 / LMG 22146 / PsJN) (Burkholderia phytofirmans)).